A 448-amino-acid chain; its full sequence is Probable glycine dehydrogenase (decarboxylating) subunit 1 (448 aa).

Belongs to the GcvP family. N-terminal subunit subfamily. In terms of assembly, the glycine cleavage system is composed of four proteins: P, T, L and H. In this organism, the P 'protein' is a heterodimer of two subunits.

It carries out the reaction N(6)-[(R)-lipoyl]-L-lysyl-[glycine-cleavage complex H protein] + glycine + H(+) = N(6)-[(R)-S(8)-aminomethyldihydrolipoyl]-L-lysyl-[glycine-cleavage complex H protein] + CO2. Its function is as follows. The glycine cleavage system catalyzes the degradation of glycine. The P protein binds the alpha-amino group of glycine through its pyridoxal phosphate cofactor; CO(2) is released and the remaining methylamine moiety is then transferred to the lipoamide cofactor of the H protein. The polypeptide is Probable glycine dehydrogenase (decarboxylating) subunit 1 (Bacillus pumilus (strain SAFR-032)).